A 174-amino-acid polypeptide reads, in one-letter code: Phosphopantetheine adenylyltransferase (174 aa).

Thr-10 contacts substrate. ATP-binding positions include 10 to 11 and His-18; that span reads TF. Substrate-binding residues include Lys-44, Leu-76, and Arg-90. Residues 91–93, Glu-101, and 126–132 each bind ATP; these read GLR and HAYISSS.

Belongs to the bacterial CoaD family. Homohexamer. Mg(2+) is required as a cofactor.

The protein localises to the cytoplasm. The catalysed reaction is (R)-4'-phosphopantetheine + ATP + H(+) = 3'-dephospho-CoA + diphosphate. It functions in the pathway cofactor biosynthesis; coenzyme A biosynthesis; CoA from (R)-pantothenate: step 4/5. Its function is as follows. Reversibly transfers an adenylyl group from ATP to 4'-phosphopantetheine, yielding dephospho-CoA (dPCoA) and pyrophosphate. The sequence is that of Phosphopantetheine adenylyltransferase from Alkalilimnicola ehrlichii (strain ATCC BAA-1101 / DSM 17681 / MLHE-1).